The chain runs to 2177 residues: Protein sidekick-2 (2177 aa).

A signal peptide spans 1 to 26; sequence MKGLGVPAAALLWGGLSALLPPSLPA. Topologically, residues 27–1937 are extracellular; it reads DDVSPYFKTE…ANPFYEEWWF (1911 aa). Ig-like C2-type domains lie at 31 to 113, 118 to 205, 220 to 299, 313 to 401, 407 to 496, and 501 to 590; these read PYFK…TEVQ, GSFE…QPIT, PTII…SSVP, PQFV…TYLA, PNIT…ADLV, and TRIT…AHLR. Residues cysteine 53 and cysteine 96 are joined by a disulfide bond. Residues asparagine 198 and asparagine 228 are each glycosylated (N-linked (GlcNAc...) asparagine). 2 disulfides stabilise this stretch: cysteine 242-cysteine 289 and cysteine 335-cysteine 385. Residue asparagine 408 is glycosylated (N-linked (GlcNAc...) asparagine). 2 disulfide bridges follow: cysteine 428-cysteine 480 and cysteine 522-cysteine 574. N-linked (GlcNAc...) asparagine glycosylation is found at asparagine 582, asparagine 614, asparagine 709, asparagine 748, asparagine 809, asparagine 941, and asparagine 953. Fibronectin type-III domains follow at residues 597 to 693, 698 to 794, 799 to 898, 902 to 996, 1000 to 1099, 1104 to 1202, 1207 to 1304, 1305 to 1402, 1407 to 1504, 1509 to 1626, 1631 to 1727, 1731 to 1826, and 1829 to 1928; these read APES…LPEE, PPQN…TLQG, PPGN…THED, PVGH…VPPE, APTN…TLQA, APAN…TRES, GPSN…TLDD, VPGP…TEKR, PPSK…TLQA, APTI…VGEA, APQN…TQQA, APGS…TGPG, and APGP…AQKA. N-linked (GlcNAc...) asparagine glycans are attached at residues asparagine 1107, asparagine 1210, asparagine 1261, asparagine 1346, asparagine 1462, asparagine 1580, asparagine 1593, asparagine 1675, asparagine 1694, asparagine 1746, and asparagine 1820. The helical transmembrane segment at 1938–1958 threads the bilayer; the sequence is LVVIALVGLIFILLLVFVLII. Residues 1959-2177 lie on the Cytoplasmic side of the membrane; sequence RGQSKKYAKK…APIGGFSSFV (219 aa). Disordered regions lie at residues 2044 to 2071 and 2103 to 2177; these read AESSSLTEKPSEVSDSQGSDSEYEVDPA and QAYS…SSFV. Composition is skewed to polar residues over residues 2045 to 2063 and 2119 to 2130; these read ESSSLTEKPSEVSDSQGSD and PLSNSTSTQQGS. Over residues 2142–2151 the composition is skewed to pro residues; it reads PQTPGNPPSQ. Positions 2171–2177 match the PDZ-binding motif; it reads GGFSSFV.

The protein belongs to the sidekick family. As to quaternary structure, homodimer; mediates homophilic interactions to promote cell adhesion. In terms of tissue distribution, expressed by non-overlapping subsets of retinal neurons. SDK1, SDK2, DSCAM and DSCAML1 are expressed in non-overlapping subsets of interneurons and retinal ganglion cells (RGCs) that form synapses in distinct inner plexiform layer (IPL) sublaminae.

It is found in the cell membrane. The protein resides in the synapse. In terms of biological role, adhesion molecule that promotes lamina-specific synaptic connections in the retina. Expressed in specific subsets of interneurons and retinal ganglion cells (RGCs) and promotes synaptic connectivity via homophilic interactions. In Gallus gallus (Chicken), this protein is Protein sidekick-2.